The sequence spans 426 residues: G2/mitotic-specific cyclin-A (426 aa).

Positions 1-11 (MSMVHGSSFQI) are enriched in polar residues. Residues 1–22 (MSMVHGSSFQIAQDGENENQGV) form a disordered region.

Belongs to the cyclin family. Cyclin AB subfamily.

Functionally, essential for the control of the cell cycle at the G2/M (mitosis) transition. Interacts with the CDC2 and CDK2 protein kinases to form MPF. G2/M cyclins accumulate steadily during G2 and are abruptly destroyed at mitosis. The polypeptide is G2/mitotic-specific cyclin-A (Patella vulgata (Common limpet)).